A 441-amino-acid chain; its full sequence is Apolipoprotein N-acyltransferase (441 aa).

7 consecutive transmembrane segments (helical) span residues 23–43 (IIFK…SIYL), 45–65 (FFEN…GLVL), 75–95 (YFWI…LSSI), 97–117 (FNLN…YGLL), 133–153 (GIFC…WGIF), 156–176 (YGFF…AYFI), and 178–198 (EGYI…FSGF). One can recognise a CN hydrolase domain in the interval 215 to 441 (INTNISQDQK…LSKEIFNDKK (227 aa)). Glu-256 acts as the Proton acceptor in catalysis. Lys-310 is a catalytic residue. Catalysis depends on Cys-359, which acts as the Nucleophile.

The protein belongs to the CN hydrolase family. Apolipoprotein N-acyltransferase subfamily.

The protein resides in the cell inner membrane. The catalysed reaction is N-terminal S-1,2-diacyl-sn-glyceryl-L-cysteinyl-[lipoprotein] + a glycerophospholipid = N-acyl-S-1,2-diacyl-sn-glyceryl-L-cysteinyl-[lipoprotein] + a 2-acyl-sn-glycero-3-phospholipid + H(+). It participates in protein modification; lipoprotein biosynthesis (N-acyl transfer). Functionally, catalyzes the phospholipid dependent N-acylation of the N-terminal cysteine of apolipoprotein, the last step in lipoprotein maturation. This Campylobacter jejuni subsp. jejuni serotype O:2 (strain ATCC 700819 / NCTC 11168) protein is Apolipoprotein N-acyltransferase.